A 752-amino-acid chain; its full sequence is Iron-sulfur clusters transporter ABCB7, mitochondrial (752 aa).

Residues M1–K22 constitute a mitochondrion transit peptide. Residues H23 to V140 are Mitochondrial matrix-facing. Residues V140–Q436 form the ABC transmembrane type-1 domain. A helical membrane pass occupies residues A141–F161. The Mitochondrial intermembrane segment spans residues K162–V185. Residues A186–F206 form a helical membrane-spanning segment. At N207–G259 the chain is on the mitochondrial matrix side. K216 and K251 each carry N6-acetyllysine. Residues I260 to L280 form a helical membrane-spanning segment. Topologically, residues V281–G290 are mitochondrial intermembrane. The chain crosses the membrane as a helical span at residues A291 to V311. The Mitochondrial matrix portion of the chain corresponds to T312–S382. A glutathione-binding site is contributed by R315 to R319. S336 is modified (phosphoserine). Y340 bears the Phosphotyrosine mark. Residue T342 is modified to Phosphothreonine. Position 350 is an N6-acetyllysine (K350). N378–Q381 serves as a coordination point for glutathione. The helical transmembrane segment at A383–G403 threads the bilayer. The Mitochondrial intermembrane portion of the chain corresponds to A404–D409. A helical membrane pass occupies residues L410–V430. G428 provides a ligand contact to glutathione. The Mitochondrial matrix segment spans residues Y431–C752. Residues V472–H706 enclose the ABC transporter domain. Residues Y481 and G505–R516 each bind ATP.

Belongs to the ABC transporter superfamily. ABCB family. Heavy Metal importer (TC 3.A.1.210) subfamily. Homodimer or heterodimer. Interacts with C10orf88/PAAT. Forms a complex with ABCB10 and FECH, where a dimeric FECH bridges ABCB7 and ABCB10 homodimers; this complex may be required for cellular iron homeostasis, mitochondrial function and heme biosynthesis. Interacts with FECH. Interacts with ATP5F1A. Interacts with COX4I1; this interaction allows the regulation of cellular iron homeostasis and cellular reactive oxygen species (ROS) levels in cardiomyocytes.

The protein resides in the mitochondrion inner membrane. The catalysed reaction is (glutathione)4[2Fe(III)-2S] cluster(in) + ATP + H2O = (glutathione)4[2Fe(III)-2S] cluster(out) + ADP + phosphate + H(+). Exports glutathione-coordinated iron-sulfur clusters such as [2Fe-2S]-(GS)4 cluster from the mitochondria to the cytosol in an ATP-dependent manner allowing the assembly of the cytosolic iron-sulfur (Fe/S) cluster-containing proteins and participates in iron homeostasis. Moreover, through a functional complex formed of ABCB7, FECH and ABCB10, also plays a role in the cellular iron homeostasis, mitochondrial function and heme biosynthesis. In cardiomyocytes, regulates cellular iron homeostasis and cellular reactive oxygen species (ROS) levels through its interaction with COX4I1. May also play a role in hematopoiesis. The protein is Iron-sulfur clusters transporter ABCB7, mitochondrial of Rattus norvegicus (Rat).